Here is a 347-residue protein sequence, read N- to C-terminus: ATP-dependent (S)-NAD(P)H-hydrate dehydratase (347 aa).

A YjeF C-terminal domain is found at Thr-53–Leu-344. Position 85 is a phosphotyrosine (Tyr-85). (6S)-NADPHX contacts are provided by residues Gly-153 and Asn-206 to Arg-212. The N-linked (GlcNAc...) asparagine glycan is linked to Asn-240. ATP-binding positions include Lys-246–Asp-250 and Gly-265–Gly-274. Residue Asp-275 participates in (6S)-NADPHX binding. Asn-297 carries an N-linked (GlcNAc...) asparagine glycan.

Belongs to the NnrD/CARKD family. Mg(2+) serves as cofactor.

Its subcellular location is the mitochondrion. The catalysed reaction is (6S)-NADHX + ATP = ADP + phosphate + NADH + H(+). The enzyme catalyses (6S)-NADPHX + ATP = ADP + phosphate + NADPH + H(+). Catalyzes the dehydration of the S-form of NAD(P)HX at the expense of ATP, which is converted to ADP. Together with NAD(P)HX epimerase, which catalyzes the epimerization of the S- and R-forms, the enzyme allows the repair of both epimers of NAD(P)HX, a damaged form of NAD(P)H that is a result of enzymatic or heat-dependent hydration. The polypeptide is ATP-dependent (S)-NAD(P)H-hydrate dehydratase (Homo sapiens (Human)).